A 250-amino-acid chain; its full sequence is HTH-type transcriptional regulator SarS (250 aa).

DNA-binding regions (H-T-H motif) lie at residues 53 to 76 and 177 to 200; these read FKKIVSDLCYKQSDLVQHIKVLVK and LKDLIETIHHKYPQTVRALNNLKK.

This sequence belongs to the SarA family.

The protein localises to the cytoplasm. Functionally, transcriptional regulator that controls expression of some virulence factors in a cell density-dependent manner. This is HTH-type transcriptional regulator SarS (sarS) from Staphylococcus aureus (strain Mu3 / ATCC 700698).